Here is a 499-residue protein sequence, read N- to C-terminus: uncharacterized protein (499 aa).

The next 11 membrane-spanning stretches (helical) occupy residues 5–25 (FLLV…YNAV), 79–99 (LGLR…TYLL), 110–130 (ALLS…ARYA), 132–152 (PEVP…EYFT), 170–190 (VLTK…FYLL), 203–223 (YAGT…QYLV), 252–272 (ALDI…ALFW), 286–306 (VWFS…PVYI), 332–352 (LSLI…SLYF), 354–374 (FSAT…LKKY), and 377–397 (LPAF…LPYV).

It belongs to the glycosyltransferase 39 family.

The protein localises to the cell membrane. This is an uncharacterized protein from Aquifex aeolicus (strain VF5).